We begin with the raw amino-acid sequence, 357 residues long: Isopenicillin-N N-acyltransferase (357 aa).

6-aminopenicillanate is bound by residues aspartate 121 and arginine 310.

This sequence belongs to the peptidase C45 family. In terms of assembly, the active form of the enzyme results from processing of the 40-kDa monomeric precursor to a heterodimer containing subunits of 11 and 29 kDa. The pre-AAT protein is synthesized as 40 kDa precursor which is then self-processed into an 11 kDa (protein A) and a 29 kDa (protein B). The B protein carries AAT activity.

The protein localises to the peroxisome matrix. The enzyme catalyses isopenicillin N + phenylacetyl-CoA + H2O = penicillin G + L-2-aminoadipate + CoA + H(+). Its pathway is antibiotic biosynthesis; penicillin G biosynthesis; penicillin G from L-alpha-aminoadipate and L-cysteine and L-valine: step 3/3. Isopenicillin-N N-acyltransferase; part of the gene cluster that mediates the biosynthesis of penicillin, the world's most important antibiotic. AatA catalyzes the exchange of the alpha-aminoadipyl side chain of isopenicillin N for phenylacetic acid to yield penicillin. This step occurs in the peroxisomal matrix and the penM and paaT transporters are involved in the isopenicillin N and phenylacetic acid import into the peroxisome, respectively. The penicillin biosynthesis occurs via 3 enzymatic steps, the first corresponding to the production of the tripeptide N-[(5S)-5-amino-5-carboxypentanoyl]-L-cysteinyl-D-valine (LLD-ACV or ACV) by the NRPS acvA. The tripeptide ACV is then cyclized to isopenicillin N (IPN) by the isopenicillin N synthase ipnA that forms the beta-lactam nucleus. Finally, the alpha-aminoadipyl side chain is exchanged for phenylacetic acid by the isopenicillin N acyltransferase aatA to yield penicillin in the peroxisomal matrix. In Penicillium chrysogenum (Penicillium notatum), this protein is Isopenicillin-N N-acyltransferase.